Consider the following 406-residue polypeptide: Cysteine desulfurase (406 aa).

The residue at position 226 (Lys-226) is an N6-(pyridoxal phosphate)lysine. The Cysteine persulfide intermediate role is filled by Cys-364.

It belongs to the class-V pyridoxal-phosphate-dependent aminotransferase family. Csd subfamily. As to quaternary structure, homodimer. Interacts with SufE and the SufBCD complex composed of SufB, SufC and SufD. The interaction with SufE is required to mediate the direct transfer of the sulfur atom from the S-sulfanylcysteine. It depends on pyridoxal 5'-phosphate as a cofactor.

It is found in the cytoplasm. It carries out the reaction (sulfur carrier)-H + L-cysteine = (sulfur carrier)-SH + L-alanine. The catalysed reaction is L-selenocysteine + AH2 = hydrogenselenide + L-alanine + A + H(+). It participates in cofactor biosynthesis; iron-sulfur cluster biosynthesis. Its function is as follows. Cysteine desulfurases mobilize the sulfur from L-cysteine to yield L-alanine, an essential step in sulfur metabolism for biosynthesis of a variety of sulfur-containing biomolecules. Component of the suf operon, which is activated and required under specific conditions such as oxidative stress and iron limitation. Acts as a potent selenocysteine lyase in vitro, that mobilizes selenium from L-selenocysteine. Selenocysteine lyase activity is however unsure in vivo. This is Cysteine desulfurase from Escherichia coli O6:K15:H31 (strain 536 / UPEC).